The following is a 374-amino-acid chain: MRIKEKPEDFVVIEKTNFSIAEPSKYYDQFKFMGIKDNGIPGDYTIYVLKKKNLSTTQAIKIIAKQFRLSKYRISFSGEKDKKAITYQLISIYKGPKKSMFLDNLELYYIGLSDKPVKLGSHLGNYFEIKVYAESPKGFDVFPNYFDVQRFGDKRLVNHLIGKHLIKNECEEAAKILLTFVGKESKKTIKVRQLIKEYWNNIEKLKKVIPLMPKALDIEKAYLQSFIEKKDYCKAFKAIPKWILMLFIHSYQSYIFNETLKMYLKNKTKIIKIRDLLEFYFADYYENIEIPLIGYKVNAKGEIKEIIDYLLDKEGITIEMLKNKKVVGTYRKGFQKMYDLKIKKNQKWLTKFYLEKGSYATVAIRSLFLEPIDF.

The Nucleophile role is filled by aspartate 81. In terms of domain architecture, TRUD spans 141 to 340 (VFPNYFDVQR…RKGFQKMYDL (200 aa)).

This sequence belongs to the pseudouridine synthase TruD family.

It carries out the reaction uridine(13) in tRNA = pseudouridine(13) in tRNA. Its function is as follows. Could be responsible for synthesis of pseudouridine from uracil-13 in transfer RNAs. This chain is Probable tRNA pseudouridine synthase D, found in Nanoarchaeum equitans (strain Kin4-M).